Reading from the N-terminus, the 641-residue chain is Uromodulin (641 aa).

Residues 1 to 24 (MGQPPLTWMLMVVVASWFITTAAT) form the signal peptide. N-linked (GlcNAc...) asparagine glycosylation is present at N25. Residues 28-64 (EARWCSECHSNATCTEDEAVTTCTCQEGFTGDGLTCV) enclose the EGF-like 1 domain. 21 disulfide bridges follow: C32–C41, C35–C50, C52–C63, C69–C83, C77–C92, C94–C106, C112–C126, C120–C135, C137–C148, C150–C161, C155–C170, C174–C267, C195–C282, C217–C255, C223–C287, C248–C256, C297–C306, C300–C315, C317–C347, C335–C425, and C366–C389. One can recognise an EGF-like 2; calcium-binding domain in the interval 65–107 (DLDECAIPGAHNCSANSSCVNTPGSFSCVCPEGFRLSPGLGCT). N76 is a glycosylation site (N-linked (GlcNAc...) asparagine). The EGF-like 3; calcium-binding domain occupies 108–149 (DVDECAEPGLSHCHALATCVNVVGNYLCVCPAGYRGDGWHCE). A beta hairpin region spans residues 150-171 (CSPGSCGPGLDCVPEGDALVCA). The interval 172–291 (DPCQAHRTLD…CHLAYCTDPS (120 aa)) is D10C. The N-linked (GlcNAc...) asparagine glycan is linked to N232. An N-linked (GlcNAc...) asparagine glycan is attached at N275. The 32-residue stretch at 292–323 (SVEGTCEECSIDEDCKSDNGRWHCQCKQDFNI) folds into the EGF-like 4 domain. N-linked (GlcNAc...) asparagine glycosylation occurs at N322. Residues 334-429 (ECGANDMKVS…KINFACSYPL (96 aa)) form a ZP-N region. Residues 334–589 (ECGANDMKVS…PTCSGTRFRS (256 aa)) enclose the ZP domain. Residues 430 to 453 (DMKVSLKTSLQPVVSALNITVGGT) form a flexible ZP-N/ZP-C linker; important for secretion and polymerization into filaments region. The N-linked (GlcNAc...) asparagine glycan is linked to N447. An internal hydrophobic patch (IHP) region spans residues 454 to 464 (GMFTVRMALFQ). The segment at 454–589 (GMFTVRMALF…PTCSGTRFRS (136 aa)) is ZP-C. 3 disulfide bridges follow: C506–C566, C527–C582, and C571–C578. Positions 586 to 589 (RFRS) are essential for cleavage by HPN. An external hydrophobic patch (EHP); regulates polymerization into filaments region spans residues 598–606 (VLNLGPITR). S614 carries GPI-anchor amidated serine lipidation. The propeptide at 615–641 (RAAFSSLGLLKVWLPLLLSATLTLTFQ) is removed in mature form.

Homodimer that then polymerizes into long filaments. The filaments can additionally assemble laterally to form a sheet. The filaments consist of a zigzag-shaped backbone with laterally protruding arms which interact with bacterial adhesin fimH. Two fimH molecules can bind to a single UMOD monomer. In terms of processing, N-glycosylated. Proteolytically cleaved at a conserved C-terminal proteolytic cleavage site to generate the secreted form found in urine. This cleavage is catalyzed by HPN.

The protein resides in the apical cell membrane. Its subcellular location is the basolateral cell membrane. It localises to the cell projection. It is found in the cilium membrane. The protein localises to the secreted. Functions in biogenesis and organization of the apical membrane of epithelial cells of the thick ascending limb of Henle's loop (TALH), where it promotes formation of complex filamentous gel-like structure that may play a role in the water barrier permeability. May serve as a receptor for binding and endocytosis of cytokines (IL-1, IL-2) and TNF. Facilitates neutrophil migration across renal epithelia. Functionally, in the urine, may contribute to colloid osmotic pressure, retards passage of positively charged electrolytes, and inhibits formation of liquid containing supersaturated salts and subsequent formation of salt crystals. Protects against urinary tract infections by binding to type 1 fimbriated E.coli. Binds to bacterial adhesin fimH which mediates the stable formation of bacterial aggregates, prevents the binding of E.coli to uroplakins UPK1A and UPK1B which act as urothelial receptors for type I fimbriae, and allows for pathogen clearance through micturation. Also promotes aggregation of other bacteria including K.pneumoniae, P.aeruginosa and S.mitis and so may also protect against other uropathogens. In Pongo abelii (Sumatran orangutan), this protein is Uromodulin (UMOD).